The following is a 339-amino-acid chain: DNA-directed RNA polymerase subunit alpha (339 aa).

Residues 1-235 (MVIQKNWQEL…DQLQIFVNFE (235 aa)) form an alpha N-terminal domain (alpha-NTD) region. The tract at residues 251–339 (FNPALLKKVD…DLAKRFEEHY (89 aa)) is alpha C-terminal domain (alpha-CTD).

This sequence belongs to the RNA polymerase alpha chain family. In terms of assembly, homodimer. The RNAP catalytic core consists of 2 alpha, 1 beta, 1 beta' and 1 omega subunit. When a sigma factor is associated with the core the holoenzyme is formed, which can initiate transcription.

The enzyme catalyses RNA(n) + a ribonucleoside 5'-triphosphate = RNA(n+1) + diphosphate. In terms of biological role, DNA-dependent RNA polymerase catalyzes the transcription of DNA into RNA using the four ribonucleoside triphosphates as substrates. In Methylobacterium nodulans (strain LMG 21967 / CNCM I-2342 / ORS 2060), this protein is DNA-directed RNA polymerase subunit alpha.